The primary structure comprises 367 residues: MSVNRILVINPGSTSTKIGVFDNERPVLEETIRHDEEQIGKYKRIIDQYEFRKETILEVLHSHGINISKLNAVCGRGGLLRPIEGGTYTVNDAMLEDLKNGFSGHHASNLGGILAYEIASGLNIPAFIVDPVVVDEMEPIARISGIAGMERKSIFHALNQKAVARKVAEQLNHKYEDLNLLVTHMGGGITVGAHKKGRVIDVNNGLNGEGPFSPERAGTVPVGQLVEMCFSGEYYRDEMIKKLVGQGGLVSLIGTNDAIKVEQMVEKGDPEATLIYKAMAYQVAKEIGGASAVLHGKIDAIVLTGGLAYSKILVDEIKERVDWIADVIVHPGEDELQALAEGALRVLREEEAPKEYIVREKETVARG.

The protein belongs to the acetokinase family.

It is found in the cytoplasm. The catalysed reaction is butanoate + ATP = butanoyl phosphate + ADP. The chain is Probable butyrate kinase from Bacillus cereus (strain Q1).